Here is a 353-residue protein sequence, read N- to C-terminus: Chorismate synthase (353 aa).

2 residues coordinate NADP(+): arginine 48 and arginine 54. Residues 125-127, 238-239, glycine 278, 293-297, and arginine 319 each bind FMN; these read RSS, NA, and KPTSS.

This sequence belongs to the chorismate synthase family. As to quaternary structure, homotetramer. Requires FMNH2 as cofactor.

The catalysed reaction is 5-O-(1-carboxyvinyl)-3-phosphoshikimate = chorismate + phosphate. The protein operates within metabolic intermediate biosynthesis; chorismate biosynthesis; chorismate from D-erythrose 4-phosphate and phosphoenolpyruvate: step 7/7. Functionally, catalyzes the anti-1,4-elimination of the C-3 phosphate and the C-6 proR hydrogen from 5-enolpyruvylshikimate-3-phosphate (EPSP) to yield chorismate, which is the branch point compound that serves as the starting substrate for the three terminal pathways of aromatic amino acid biosynthesis. This reaction introduces a second double bond into the aromatic ring system. The protein is Chorismate synthase of Bordetella pertussis (strain Tohama I / ATCC BAA-589 / NCTC 13251).